The sequence spans 692 residues: MMRPIVVKEKQIHVVEDEVRQAKTMDRDIVKHAMKQSFAKLNPKVMIKNPIMFVVEIGFIITFILSFLPSHSSSVPGWFNITVSLILLFTVLFANFAEALAEGRGKAQADSLKQSKKDVFANVVKENGDIVQVSATDLRKGDLVIVKQGEMIPSDGEVIKGLASVDESAITGESAPVIKEAGGDFCSVTGGTMVVSDEITIVITSNPGESFIDKMISLVEGAARQKTPNEIALNTVLTSLTLIFLIVVVTLPIFTNYLGFQIDTAVLVALLVCLIPTTIGGLLSAIGIAGMDRVTKFNVLAMSGKAVEAAGDINTIILDKTGTITFGNRMAHTLLPVGNETIEQVGKWAAISSVLDETPEGRSVIEYVKTKSISYNREIAEQGEFVPFKAETRMSGVDLQDGTKVRKGAVGSVIEWVRSQGGTIPKDVNQKADFISKEGGTPLVVAVDNRIYGLIYLKDTVKPGMRERFEQLRQMGIKTVMCTGDNPLTAATIAKEAGVDEFVAECKPEDKIAVIKAEQDKGKLVAMTGDGTNDAPALAQADVGLAMNSGTTAAKEAANMIDLDSNPTKIIEVVGIGKQLLMTRGALTTFSIANDIAKYFAIIPAMFTLAIPQMEALNIMKLTSPLSAILSALIFNAVIIPLLIPLAMKGIAYKPMSSNALLGRNLLIYGLGGVIVPFIGIKVIDIIVGLFI.

4 consecutive transmembrane segments (helical) span residues 50–70 (PIMF…FLPS), 77–97 (GWFN…ANFA), 240–260 (LTLI…YLGF), and 266–286 (VLVA…LSAI). Catalysis depends on aspartate 319, which acts as the 4-aspartylphosphate intermediate. Residues aspartate 356, glutamate 360, 388-395 (FKAETRMS), and lysine 407 each bind ATP. 2 residues coordinate Mg(2+): aspartate 530 and aspartate 534. 3 helical membrane-spanning segments follow: residues 600 to 620 (FAII…LNIM), 628 to 648 (AILS…PLAM), and 672 to 692 (GGVI…GLFI).

The protein belongs to the cation transport ATPase (P-type) (TC 3.A.3) family. Type IA subfamily. In terms of assembly, the system is composed of three essential subunits: KdpA, KdpB and KdpC.

It localises to the cell membrane. The catalysed reaction is K(+)(out) + ATP + H2O = K(+)(in) + ADP + phosphate + H(+). Part of the high-affinity ATP-driven potassium transport (or Kdp) system, which catalyzes the hydrolysis of ATP coupled with the electrogenic transport of potassium into the cytoplasm. This subunit is responsible for energy coupling to the transport system and for the release of the potassium ions to the cytoplasm. This is Potassium-transporting ATPase ATP-binding subunit from Bacillus cereus (strain 03BB102).